Here is a 179-residue protein sequence, read N- to C-terminus: Large ribosomal subunit protein uL6 (179 aa).

It belongs to the universal ribosomal protein uL6 family. As to quaternary structure, part of the 50S ribosomal subunit.

Its function is as follows. This protein binds to the 23S rRNA, and is important in its secondary structure. It is located near the subunit interface in the base of the L7/L12 stalk, and near the tRNA binding site of the peptidyltransferase center. This chain is Large ribosomal subunit protein uL6, found in Prochlorococcus marinus (strain MIT 9312).